The chain runs to 1127 residues: Structural protein MDM1 (1127 aa).

The PXA domain occupies 85-273 (NAQIGKELES…WNLRIVSLSQ (189 aa)). Phosphoserine is present on residues Ser670, Ser673, and Ser692. Residues 705–762 (SNNFRDNIASLTISIDQIEKELELLRHLILKADLTNNQMQLKILKKSQRTLLKELEMK) adopt a coiled-coil conformation. Residues 782–905 (TKIYIRSYFS…RFLTDPTPFK (124 aa)) enclose the PX domain.

Belongs to the sorting nexin family.

It localises to the cytoplasm. Its function is as follows. Essential for mitotic growth. Mediates organelle inheritance. The sequence is that of Structural protein MDM1 (MDM1) from Saccharomyces cerevisiae (strain ATCC 204508 / S288c) (Baker's yeast).